The chain runs to 569 residues: 4-coumarate--CoA ligase 2 (569 aa).

6 residues coordinate ATP: Ser219, Ser220, Gly221, Thr222, Thr223, and Lys227. Positions 269 and 273 each coordinate (E)-4-coumaroyl-AMP. Arg290 contacts CoA. The tract at residues 292 to 361 is SBD1; the sequence is EMGAMLGAIE…ARLPQAIFGQ (70 aa). (E)-4-coumaroyl-AMP-binding residues include Ala339, Gln361, Gly362, Thr366, and Met374. Residues Gln361, Gly362, and Thr366 each contribute to the ATP site. The tract at residues 362–429 is SBD2; that stretch reads GYGMTEAGPV…IRGPQIMKGY (68 aa). ATP-binding residues include Asp450 and Arg465. (E)-4-coumaroyl-AMP is bound by residues Lys467 and Lys471. 2 residues coordinate CoA: Lys473 and Gly474. Lys556 is a binding site for ATP.

The protein belongs to the ATP-dependent AMP-binding enzyme family. It depends on Mg(2+) as a cofactor. Expressed in roots, stems, leaf blades, leaf sheaths and spikelets.

The enzyme catalyses (E)-ferulate + ATP + CoA = (E)-feruloyl-CoA + AMP + diphosphate. The catalysed reaction is (E)-4-coumarate + ATP + CoA = (E)-4-coumaroyl-CoA + AMP + diphosphate. It carries out the reaction (E)-caffeate + ATP + CoA = (E)-caffeoyl-CoA + AMP + diphosphate. It catalyses the reaction (E)-cinnamate + ATP + CoA = (E)-cinnamoyl-CoA + AMP + diphosphate. The enzyme catalyses (E)-ferulate + ATP + H(+) = (E)-feruloyl-AMP + diphosphate. The catalysed reaction is (E)-feruloyl-AMP + CoA = (E)-feruloyl-CoA + AMP + H(+). It carries out the reaction (E)-4-coumarate + ATP + H(+) = (E)-4-coumaroyl-AMP + diphosphate. It catalyses the reaction (E)-4-coumaroyl-AMP + CoA = (E)-4-coumaroyl-CoA + AMP + H(+). The enzyme catalyses (E)-caffeate + ATP + H(+) = (E)-caffeoyl-AMP + diphosphate. The catalysed reaction is (E)-caffeoyl-AMP + CoA = (E)-caffeoyl-CoA + AMP + H(+). It functions in the pathway phytoalexin biosynthesis; 3,4',5-trihydroxystilbene biosynthesis; 3,4',5-trihydroxystilbene from trans-4-coumarate: step 1/2. Its function is as follows. Involved in the phenylpropanoid metabolism by mediating the activation of a number of hydroxycinnamates for the biosynthesis of monolignols and other phenolic secondary metabolites. Catalyzes the formation of CoA esters of cinnamate, 4-coumarate, caffeate and ferulate. Is more efficient with substrates in the following order: ferulate &gt; 4-coumarate &gt; caffeate &gt; cinnamate. Cannot convert sinapate to its corresponding CoA ester. Follows a two-step reaction mechanism, wherein the carboxylate substrate first undergoes adenylation by ATP, followed by a thioesterification in the presence of CoA to yield the final CoA thioester. In Oryza sativa subsp. japonica (Rice), this protein is 4-coumarate--CoA ligase 2.